We begin with the raw amino-acid sequence, 501 residues long: Neuronal acetylcholine receptor subunit beta-2 (501 aa).

A signal peptide spans 1–25 (MARCSNSMALLFSFGLLWLCSGVLG). Topologically, residues 26–238 (TDTEERLVEH…IIRRKPLFYT (213 aa)) are extracellular. N-linked (GlcNAc...) asparagine glycosylation is found at Asn51 and Asn168. A disulfide bridge connects residues Cys155 and Cys169. The chain crosses the membrane as a helical span at residues 239 to 259 (INLIIPCVLITSLAILVFYLP). Topologically, residues 260 to 267 (SDCGEKMT) are cytoplasmic. The helical transmembrane segment at 268–288 (LCISVLLALTVFLLLISKIVP) threads the bilayer. Topologically, residues 289 to 300 (PTSLDVPLVGKY) are extracellular. The chain crosses the membrane as a helical span at residues 301–321 (LMFTMVLVTFSIVTSVCVLNV). At 322–459 (HHRSPTTHTM…WKYVAMVIDR (138 aa)) the chain is on the cytoplasmic side. The chain crosses the membrane as a helical span at residues 460–480 (LFLWIFVFVCVFGTIGMFLQP).

Belongs to the ligand-gated ion channel (TC 1.A.9) family. Acetylcholine receptor (TC 1.A.9.1) subfamily. Beta-2/CHRNB2 sub-subfamily. Neuronal AChR is a heteropentamer composed of two different types of subunits: alpha and beta. CHRNB2/Beta-2 subunit can be combined to CHRNA2/alpha-2, CHRNA3/alpha-3 or CHRNA4/alpha-4, CHRNA5/alpha-5, CHRNA6/alpha-6 and CHRNB3/beta-3 to give rise to functional receptors. CHRNA2:CHRNB2 and CHRNA4:CHRNB2 nAChR complexes exist in two subtypes: LS (low agonist sensitivity) with a (CHRNA2/4)3:(CHRNB2)2 and HS (high agonist sensitivity) with a (CHRNA2/4)2:(CHRNB2)3 stoichiometry; the subtypes differ in their subunit binding interfaces which are involved in ligand binding. Cells produce predominantly an (CHRNA4)3:(CHRNB2)2 nAChR. The stoichiometric form (CHRNA4)2:(CHRNB2)3 expression is selectively up-regulated by nicotine and has lower single channel conductance and calcium permeability. Also part of the stoichiometric forms: (CHRNA4:CHRNB2)2:CHRNB3 or (CHRNA6:CHRNB2)2:CHRNB3. Can form heteropentamers with CHRNA7, mainly found in basal forebrain cholinergic neurons. Interacts with RIC3; which is required for proper folding and assembly. Interacts with LYPD6.

Its subcellular location is the synaptic cell membrane. It is found in the cell membrane. It carries out the reaction K(+)(in) = K(+)(out). The catalysed reaction is Na(+)(in) = Na(+)(out). It catalyses the reaction Ca(2+)(in) = Ca(2+)(out). Its activity is regulated as follows. Activated by a myriad of ligands such as acetylcholine, cytisine, nicotine, choline and epibatidine. Channel potentiation by calcium is stoichiometry-selective, CHRNA4:CHRNB2 nACh receptor is achieved by calcium association with topographically distinct sites framed by anionic residues within the CHRNA4 subunit and between the CHRNA4 and CHRNB2 subunits. Oligomeric amyloid-beta protein 42 activates specifially CHRNA7:CHRNB2 nAchRs. nAChR activity is inhibited by the antagonist alpha-conotoxins BuIA, PnIA, PnIC, GID and MII, small disulfide-constrained peptides from cone snails. Functionally, component of neuronal acetylcholine receptors (nAChRs) that function as pentameric, ligand-gated cation channels with high calcium permeability among other activities. nAChRs are excitatory neurotrasnmitter receptors formed by a collection of nAChR subunits known to mediate synaptic transmission in the nervous system and the neuromuscular junction. Each nAchR subunit confers differential attributes to channel properties, including activation, deactivation and desensitization kinetics, pH sensitivity, cation permeability, and binding to allosteric modulators. CHRNB2 forms heteropentameric neuronal acetylcholine receptors with CHRNA2, CHRNA3, CHRNA4 and CHRNA6, as well as CHRNA5 and CHRNB3 as accesory subunits. Found in two major stoichiometric forms,(CHRNA4)3:(CHRNB2)2 and (CHRNA4)2:(CHRNB2)3, the two stoichiometric forms differ in their unitary conductance, calcium permeability, ACh sensitivity and potentiation by divalent cation. Heteropentameric channels with CHRNA6 and CHRNA4 exhibit high sensitivity to ACh and nicotine and are predominantly expressed in only a few brain areas, including dopaminergic neurons, norepirephrine neurons and cells of the visual system. nAChrs containing CHRNA6 subunits mediate endogenous cholinergic modulation of dopamine and gamma-aminobutyric acid (GABA) release in response to nicotine at nerve terminals. Also forms functional nAChRs with other subunits such as CHRNA7:CHRNB2, mainly expressed in basal forebrain cholinergic neurons. The sequence is that of Neuronal acetylcholine receptor subunit beta-2 (Chrnb2) from Mus musculus (Mouse).